The following is a 254-amino-acid chain: Decaprenylphosphoryl-2-keto-beta-D-erythro-pentose reductase (254 aa).

D67 contributes to the NAD(+) binding site. Y160 serves as the catalytic Proton acceptor. K164 is an NAD(+) binding site.

It belongs to the short-chain dehydrogenases/reductases (SDR) family. Interacts with DprE1 to form an epimerase complex.

The protein resides in the periplasm. It catalyses the reaction trans,octa-cis-decaprenylphospho-beta-D-arabinofuranose + NAD(+) = trans,octa-cis-decaprenylphospho-beta-D-erythro-pentofuranosid-2-ulose + NADH + H(+). Its pathway is cell wall biogenesis; cell wall polysaccharide biosynthesis. Functionally, component of the DprE1-DprE2 complex that catalyzes the 2-step epimerization of decaprenyl-phospho-ribose (DPR) to decaprenyl-phospho-arabinose (DPA), a key precursor that serves as the arabinose donor required for the synthesis of cell-wall arabinans. DprE1 catalyzes the first step of epimerization, namely FAD-dependent oxidation of the C2' hydroxyl of DPR to yield the keto intermediate decaprenyl-phospho-2'-keto-D-arabinose (DPX). The intermediate DPX is then transferred to DprE2 subunit of the epimerase complex, most probably through a 'substrate channel' at the interface of DprE1-DprE2 complex. DprE2 then catalyzes the second step of epimerization, the NAD(+)-dependent reduction of DPX that leads to the formation of DPA. This chain is Decaprenylphosphoryl-2-keto-beta-D-erythro-pentose reductase, found in Mycolicibacterium smegmatis (strain ATCC 700084 / mc(2)155) (Mycobacterium smegmatis).